The chain runs to 196 residues: Imidazole glycerol phosphate synthase subunit HisH (196 aa).

The Glutamine amidotransferase type-1 domain maps to 2–196 (KVAVIKYNAG…ERIIKNFLEL (195 aa)). The active-site Nucleophile is the cysteine 77. Catalysis depends on residues histidine 178 and glutamate 180.

As to quaternary structure, heterodimer of HisH and HisF.

The protein localises to the cytoplasm. The catalysed reaction is 5-[(5-phospho-1-deoxy-D-ribulos-1-ylimino)methylamino]-1-(5-phospho-beta-D-ribosyl)imidazole-4-carboxamide + L-glutamine = D-erythro-1-(imidazol-4-yl)glycerol 3-phosphate + 5-amino-1-(5-phospho-beta-D-ribosyl)imidazole-4-carboxamide + L-glutamate + H(+). It carries out the reaction L-glutamine + H2O = L-glutamate + NH4(+). It participates in amino-acid biosynthesis; L-histidine biosynthesis; L-histidine from 5-phospho-alpha-D-ribose 1-diphosphate: step 5/9. Functionally, IGPS catalyzes the conversion of PRFAR and glutamine to IGP, AICAR and glutamate. The HisH subunit catalyzes the hydrolysis of glutamine to glutamate and ammonia as part of the synthesis of IGP and AICAR. The resulting ammonia molecule is channeled to the active site of HisF. The polypeptide is Imidazole glycerol phosphate synthase subunit HisH (Bacteroides fragilis (strain ATCC 25285 / DSM 2151 / CCUG 4856 / JCM 11019 / LMG 10263 / NCTC 9343 / Onslow / VPI 2553 / EN-2)).